The following is a 105-amino-acid chain: ATP-dependent Clp protease adapter protein ClpS (105 aa).

It belongs to the ClpS family. In terms of assembly, binds to the N-terminal domain of the chaperone ClpA.

Its function is as follows. Involved in the modulation of the specificity of the ClpAP-mediated ATP-dependent protein degradation. In Prochlorococcus marinus (strain MIT 9515), this protein is ATP-dependent Clp protease adapter protein ClpS.